Consider the following 20-residue polypeptide: Neurotoxin BmK 18(2) (20 aa).

Residues 2–20 (RDAYIAEDYDCVYHCARDA) enclose the LCN-type CS-alpha/beta domain.

Belongs to the long (4 C-C) scorpion toxin superfamily. Sodium channel inhibitor family. Alpha subfamily. As to expression, expressed by the venom gland.

Its subcellular location is the secreted. Binds to sodium channels (Nav) and inhibits the inactivation of the activated channels, thereby blocking neuronal transmission. The protein is Neurotoxin BmK 18(2) of Olivierus martensii (Manchurian scorpion).